The chain runs to 272 residues: R3H domain-containing protein 4 (272 aa).

The segment at 141–167 is disordered; sequence LEDEGKSKARRRGPTRGEDRRREDPAY. Residues 155-165 show a composition bias toward basic and acidic residues; sequence TRGEDRRREDP. One can recognise an R3H domain in the interval 191-254; the sequence is METLETWEER…KRQMKVSNRH (64 aa).

It localises to the nucleus. This is R3H domain-containing protein 4 (R3HDM4) from Bos taurus (Bovine).